Consider the following 1379-residue polypeptide: ABC multidrug transporter MDR2 (1379 aa).

A helical transmembrane segment spans residues 65-85 (IALIVIGTIAGIGAGIPFPLL). The 299-residue stretch at 69–367 (VIGTIAGIGA…MAPFMHIFAS (299 aa)) folds into the ABC transmembrane type-1 1 domain. A glycan (N-linked (GlcNAc...) asparagine) is linked at Asn-97. The next 5 helical transmembrane spans lie at 119-139 (VLQV…HTGC), 193-213 (KVGL…VAFL), 215-235 (VATI…MAFG), 301-321 (IQFG…FWQG), and 336-356 (VSVG…FVLS). The region spanning 403–682 (IELQDVTFNY…DGVYAGMVRL (280 aa)) is the ABC transporter 1 domain. 438–445 (GTSGSGKS) contributes to the ATP binding site. Asn-552 and Asn-633 each carry an N-linked (GlcNAc...) asparagine glycan. Residues 738 to 758 (YMPEEADSLPTEPENEKEKPK) are disordered. A run of 4 helical transmembrane segments spans residues 781–801 (LGLI…VIFG), 820–840 (GMLF…AVIV), 901–921 (IGVL…SHVI), and 922–942 (AWRI…SGVL). An ABC transmembrane type-1 2 domain is found at 781–1068 (LGLITSIMIG…MFALVPDISK (288 aa)). N-linked (GlcNAc...) asparagine glycosylation occurs at Asn-989. A run of 2 helical transmembrane segments spans residues 1008–1028 (FWLS…YWWG) and 1032–1052 (ILAG…LLFS). Positions 1135–1374 (VQFRNVHFRY…CESYRANVIH (240 aa)) constitute an ABC transporter 2 domain. 1170–1177 (GPSGSGKS) contacts ATP.

Belongs to the ABC transporter superfamily. ABCB family. Multidrug resistance exporter (TC 3.A.1.201) subfamily.

The protein localises to the cell membrane. In terms of biological role, pleiotropic ABC efflux transporter that may be involved in the modulation susceptibility to a wide range of unrelated cytotoxic compounds. This Trichophyton equinum (strain ATCC MYA-4606 / CBS 127.97) (Horse ringworm fungus) protein is ABC multidrug transporter MDR2.